The sequence spans 145 residues: MYPAHLLLLLAVCVSLLGASAIPPLPLNLAQFALVIKCADKGKRPRWHYMDYGCYCGPGGSGTPVDELDRCCKTHDQCYAQAEKKGCYPKLTMYSYYCGGDGPYCNSKTECQRFVCDCDVRAADCFARYPYNNKNYNINTSKRCK.

Residues M1–A21 form the signal peptide. A propeptide spanning residues I22–L27 is cleaved from the precursor. 7 cysteine pairs are disulfide-bonded: C38-C98, C54-C144, C56-C72, C71-C125, C78-C118, C87-C111, and C105-C116. Ca(2+)-binding residues include Y55, G57, and G59. The active site involves H75. D76 contributes to the Ca(2+) binding site. The active site involves D119.

Belongs to the phospholipase A2 family. Group I subfamily. D49 sub-subfamily. Ca(2+) serves as cofactor. Expressed by the venom gland.

The protein resides in the secreted. The enzyme catalyses a 1,2-diacyl-sn-glycero-3-phosphocholine + H2O = a 1-acyl-sn-glycero-3-phosphocholine + a fatty acid + H(+). Functionally, PLA2 catalyzes the calcium-dependent hydrolysis of the 2-acyl groups in 3-sn-phosphoglycerides. This is Basic phospholipase A2 P'513 from Laticauda laticaudata (Blue-ringed sea krait).